The sequence spans 105 residues: Large ribosomal subunit protein eL33 (105 aa).

This sequence belongs to the eukaryotic ribosomal protein eL33 family.

Functionally, the protein was found to bind to both initiator and elongator tRNAs and consequently was assigned to the P site or P and A site. The chain is Large ribosomal subunit protein eL33 (rpl35a) from Dictyostelium discoideum (Social amoeba).